A 3498-amino-acid polypeptide reads, in one-letter code: Mediator of RNA polymerase II transcription subunit 12 (3498 aa).

Disordered stretches follow at residues 365–456, 497–764, 2209–2576, 2589–2620, 2637–2889, and 2917–3498; these read IKQH…HTDI, GGVG…EPEK, AKKR…AYMK, ENNRIMEEQQREREMEAARKEAARRAAEEAYA, LRKE…KEKQ, and NVAG…PNQY. The segment covering 368 to 394 has biased composition (basic residues); it reads HEKRKAGSLKKSERRRRRGLSKNRPKK. The span at 404 to 416 shows a compositional bias: basic and acidic residues; it reads SLDHDKVQIKQEP. Composition is skewed to polar residues over residues 424–440 and 512–536; these read GQQSDNSMDYDSFSHQY and SNPTPTETVNTQPQIDFESSPSASP. Residues 539-570 are a coiled coil; sequence SVDKENECEKKEDESKTKEKNKDKEKDKEKEK. 2 stretches are compositionally biased toward basic and acidic residues: residues 540–578 and 593–614; these read VDKENECEKKEDESKTKEKNKDKEKDKEKEKSVDEHTND and ANDKTDASEKQKLVEEEPTGKE. The segment covering 621-630 has biased composition (low complexity); the sequence is SKTAKTSTSA. Composition is skewed to basic and acidic residues over residues 691-719, 738-764, and 2209-2285; these read EVDKAPEVDKSEKEHEDDIMIIESNKKAD, ESEKKKDGEEERDKNKDTDVADNEPEK, and AKKR…KRAS. The required for nuclear localization stretch occupies residues 2142-3498; sequence QTTRLDKVAK…YPNQQPPNQY (1357 aa). Residues 2203–2290 adopt a coiled-coil conformation; sequence VIDEEEAKKR…EKRASDAAAA (88 aa). Low complexity-rich tracts occupy residues 2342–2360 and 2409–2431; these read RADTAQAAAATTQWNAPIA and LADASAAAAAANSNAMGNTSSMP. Positions 2395 to 2420 form a coiled coil; that stretch reads RNLLNRKKEEKRNSLADASAAAAAAN. Residues 2444-2456 are compositionally biased toward polar residues; the sequence is QSAGATQQLQGMQ. Low complexity predominate over residues 2459-2479; it reads QMGGSMSGMNQNMGGMNQSMS. Polar residues predominate over residues 2514 to 2530; it reads NRSSGPVSSETRQQIME. Basic and acidic residues-rich tracts occupy residues 2547–2576, 2589–2616, and 2637–2724; these read QKQRDAREREAREREAREHQERMQREAYMK, ENNRIMEEQQREREMEAARKEAARRAAE, and LRKE…EQQR. Over residues 2725–2770 the composition is skewed to low complexity; it reads RSQQNPYMNQQGQYSQQPPPSYQQSSYPNNYQPGQQGNQPPNYQQP. Positions 2771–2783 are enriched in polar residues; it reads SHQSMQQGHQAGY. Residues 2784–2810 are compositionally biased toward low complexity; sequence QQTSNQMQMNMQQQQNRQQGGPQQSFS. 4 stretches are compositionally biased toward polar residues: residues 2816-2827, 2842-2852, 2868-2881, and 2926-2956; these read NQPSQPGYSGYN, RNPFGNQQDMQ, HAQQYQHTQNQLSL, and GQQQLGASDQMGTSQLPGASTSRMNQGSSNP. Positions 2957–2993 are enriched in low complexity; sequence QGGMQSYQQQQPVLGQPGPIQTGQSTQQQIPAQSQQQ. The span at 2994-3009 shows a compositional bias: polar residues; the sequence is YNSGRPQMHTTPTKND. Low complexity predominate over residues 3039-3100; the sequence is GQNVPGGYQQ…NVSQSQSAAQ (62 aa). Polar residues predominate over residues 3103 to 3127; that stretch reads RPSQDSAYQQSGYNQTGNQSYQRPD. Composition is skewed to low complexity over residues 3128–3184 and 3192–3223; these read QQQQ…SAQY and QGYDQQQQGQIAPQQAQNPQASQSYGQQQTQQ. The span at 3231-3253 shows a compositional bias: polar residues; it reads SGYTANSGGSSNILNQSMEESGL. Over residues 3254-3311 the composition is skewed to low complexity; it reads NQGFSGASSNASSQQGGSSQMQQSGYGMPGNQMQMQQNQKQQVQRGMPTGMGQTNMGQ. Gly residues predominate over residues 3312–3321; sequence SGMGQSGMGQ. Low complexity-rich tracts occupy residues 3336–3356 and 3370–3408; these read QGQQSQQPQQPQVSQQQNQRG and QQQHQPQQSQISQQQQQQDQYRRMQAAQMQQQPTAQGQQ. Positions 3414–3425 are enriched in polar residues; sequence PSQQQSGAAYSN. Over residues 3426 to 3436 the composition is skewed to low complexity; the sequence is QMQFQGVRQGQ. Gly residues predominate over residues 3437–3446; sequence QGMGGMGGSG. The segment covering 3447-3498 has biased composition (low complexity); the sequence is QQQPQTQPHGSNQYYQQQQDQRMQQQPQQPGQQQQHGYGMGQYPNQQPPNQY.

The protein belongs to the Mediator complex subunit 12 family. Component of the Mediator complex. As to expression, ubiquitously expressed.

The protein resides in the nucleus. Its function is as follows. Component of the Mediator complex, a coactivator involved in regulated gene transcription of nearly all RNA polymerase II-dependent genes. Mediator functions as a bridge to convey information from gene-specific regulatory proteins to the basal RNA polymerase II transcription machinery. Mediator is recruited to promoters by direct interactions with regulatory proteins and serves as a scaffold for the assembly of a functional preinitiation complex with RNA polymerase II and the general transcription factors. Functions downstream of let-60 during vulval induction. Required for asymmetric division of T-cells and for hypodermal development. The polypeptide is Mediator of RNA polymerase II transcription subunit 12 (dpy-22) (Caenorhabditis elegans).